We begin with the raw amino-acid sequence, 416 residues long: Cysteate synthase (416 aa).

Lys-104 carries the post-translational modification N6-(pyridoxal phosphate)lysine. Position 130 (Asn-130) interacts with pyridoxal 5'-phosphate.

The protein belongs to the threonine synthase family. Cysteate synthase subfamily. As to quaternary structure, homotrimer. Pyridoxal 5'-phosphate is required as a cofactor.

The enzyme catalyses O-phospho-L-serine + sulfite + H(+) = L-cysteate + phosphate. The protein operates within cofactor biosynthesis; coenzyme M biosynthesis. Its activity is regulated as follows. Is inhibited by AP3 (DL-2-amino-3-phosphonopropionate) and, to a lesser extent, by L-aspartate or AP4 (DL-2-amino-4-phosphonobutyrate). Is also inhibited by EDTA in vitro. In terms of biological role, specifically catalyzes the beta-elimination of phosphate from L-phosphoserine and the beta-addition of sulfite to the dehydroalanine intermediate to produce L-cysteate. Does not display threonine synthase activity like the paralog protein ThrC. The chain is Cysteate synthase from Methanosarcina acetivorans (strain ATCC 35395 / DSM 2834 / JCM 12185 / C2A).